The chain runs to 456 residues: RuvB-like 1 (456 aa).

A Glycyl lysine isopeptide (Lys-Gly) (interchain with G-Cter in SUMO2) cross-link involves residue Lys-2. ATP is bound at residue 70–77; it reads GPPGTGKT. Lys-225 participates in a covalent cross-link: Glycyl lysine isopeptide (Lys-Gly) (interchain with G-Cter in SUMO1); alternate. Lys-225 participates in a covalent cross-link: Glycyl lysine isopeptide (Lys-Gly) (interchain with G-Cter in SUMO2); alternate. Lys-445 participates in a covalent cross-link: Glycyl lysine isopeptide (Lys-Gly) (interchain with G-Cter in SUMO2). The residue at position 453 (Lys-453) is an N6-acetyllysine.

This sequence belongs to the RuvB family. As to quaternary structure, forms homohexameric rings. Can form a dodecamer with RUVBL2 made of two stacked hexameric rings; however, even though RUVBL1 and RUVBL2 are present in equimolar ratio, the oligomeric status of each hexamer is not known. Oligomerization may regulate binding to nucleic acids and conversely, binding to nucleic acids may affect the dodecameric assembly. Interaction of the complex with DHX34 results in conformational changes of the N-terminus of the RUVBL2 subunits, resulting in loss of nucleotide binding ability and ATP hydrolysis of the complex. Interacts with the transcriptional activation domain of MYC. Component of the RNA polymerase II holoenzyme complex. May also act to bridge the LEF1/TCF1-CTNNB1 complex and TBP. Component of the NuA4 histone acetyltransferase complex which contains the catalytic subunit KAT5/TIP60 and the subunits EP400, TRRAP/PAF400, BRD8/SMAP, EPC1, DMAP1/DNMAP1, RUVBL1/TIP49, RUVBL2, ING3, actin, ACTL6A/BAF53A, MORF4L1/MRG15, MORF4L2/MRGX, MRGBP, YEATS4/GAS41, VPS72/YL1 and MEAF6. The NuA4 complex interacts with MYC and the adenovirus E1A protein. RUVBL1 interacts with EP400. Component of a NuA4-related complex which contains EP400, TRRAP/PAF400, SRCAP, BRD8/SMAP, EPC1, DMAP1/DNMAP1, RUVBL1/TIP49, RUVBL2, actin, ACTL6A/BAF53A, VPS72 and YEATS4/GAS41. Component of the BAF53 complex, at least composed of ACTL6A/BAF53A, RUVBL1/TIP49, SMARCA2/BRM, and TRRAP/PAF400. Component of some MLL1/MLL complex, at least composed of the core components KMT2A/MLL1, ASH2L, HCFC1/HCF1, WDR5 and RBBP5, as well as the facultative components BACC1, CHD8, E2F6, HSP70, INO80C, KANSL1, LAS1L, MAX, MCRS1, MGA, MYST1/MOF, PELP1, PHF20, PRP31, RING2, RUVB1/TIP49A, RUVB2/TIP49B, SENP3, TAF1, TAF4, TAF6, TAF7, TAF9 and TEX10. Associates with alpha and gamma tubulins, particularly during metaphase and early anaphase. Interacts with NPAT. Component of the chromatin-remodeling INO80 complex; specifically part of a complex module associated with the helicase ATP-binding and the helicase C-terminal domain of INO80. Interacts with IGHMBP2. Interacts with OFD1. Interacts with HINT1. Component of a complex with USP49 and PSMC5. Component of a SWR1-like complex. Component of the R2TP complex composed at least of RUVBL1, RUVBL2, RPAP3 and PIHD1. Component of the PAQosome complex which is responsible for the biogenesis of several protein complexes and which consists of R2TP complex members RUVBL1, RUVBL2, RPAP3 and PIH1D1, URI complex members PFDN2, PFDN6, PDRG1, UXT and URI1 as well as ASDURF, POLR2E and DNAAF10/WDR92. Interacts with PIH1D1. Interacts with ITFG1. Interacts with WAC; WAC positively regulates MTOR activity by promoting the assembly of the TTT complex composed of TELO2, TTI1 and TTI2 and the RUVBL complex composed of RUVBL1 and RUVBL2 into the TTT-RUVBL complex which leads to the dimerization of the mTORC1 complex and its subsequent activation. The RUVBL1/RUVBL2 complex interacts with ZNHIT1 (via HIT-type zinc finger), ZNHIT3 (via HIT-type zinc finger), ZNHIT6 (via HIT-type zinc finger) and DDX59/ZNHIT5 (via HIT-type zinc finger) in the presence of ADP. Interacts with NOPCHAP1; the interaction is direct and disrupted upon ATP binding. Interacts with SMG1. Interacts with NOP2, NOP56 and NUFIP1.

Its subcellular location is the nucleus matrix. The protein localises to the nucleus. It is found in the nucleoplasm. It localises to the cytoplasm. The protein resides in the membrane. Its subcellular location is the cytoskeleton. The protein localises to the microtubule organizing center. It is found in the centrosome. It localises to the dynein axonemal particle. The enzyme catalyses ATP + H2O = ADP + phosphate + H(+). Its function is as follows. Possesses single-stranded DNA-stimulated ATPase and ATP-dependent DNA helicase (3' to 5') activity; hexamerization is thought to be critical for ATP hydrolysis and adjacent subunits in the ring-like structure contribute to the ATPase activity. Component of the NuA4 histone acetyltransferase complex which is involved in transcriptional activation of select genes principally by acetylation of nucleosomal histones H4 and H2A. This modification may both alter nucleosome-DNA interactions and promote interaction of the modified histones with other proteins which positively regulate transcription. This complex may be required for the activation of transcriptional programs associated with oncogene and proto-oncogene mediated growth induction, tumor suppressor mediated growth arrest and replicative senescence, apoptosis, and DNA repair. The NuA4 complex ATPase and helicase activities seem to be, at least in part, contributed by the association of RUVBL1 and RUVBL2 with EP400. NuA4 may also play a direct role in DNA repair when recruited to sites of DNA damage. Component of a SWR1-like complex that specifically mediates the removal of histone H2A.Z/H2AZ1 from the nucleosome. Proposed core component of the chromatin remodeling INO80 complex which exhibits DNA- and nucleosome-activated ATPase activity and catalyzes ATP-dependent nucleosome sliding. Plays an essential role in oncogenic transformation by MYC and also modulates transcriptional activation by the LEF1/TCF1-CTNNB1 complex. Essential for cell proliferation. May be able to bind plasminogen at cell surface and enhance plasminogen activation. The polypeptide is RuvB-like 1 (Ruvbl1) (Mus musculus (Mouse)).